A 241-amino-acid polypeptide reads, in one-letter code: Putative integrase ORF241 (241 aa).

Positions 82–241 (VEAKKTLVSA…AIEMLRKLAD (160 aa)) constitute a Tyr recombinase domain. Active-site residues include Arg-119, Lys-144, His-191, Arg-194, and His-217. Tyr-226 serves as the catalytic O-(3'-phospho-DNA)-tyrosine intermediate.

It belongs to the 'phage' integrase family.

In terms of biological role, this protein may encode an integrase, which is necessary for integration of the viral DNA into host genome. The protein is Putative integrase ORF241 of Acidianus convivator (ATV).